We begin with the raw amino-acid sequence, 343 residues long: UDP-3-O-acylglucosamine N-acyltransferase 2 (343 aa).

The Proton acceptor role is filled by H251.

It belongs to the transferase hexapeptide repeat family. LpxD subfamily. Homotrimer.

It catalyses the reaction a UDP-3-O-[(3R)-3-hydroxyacyl]-alpha-D-glucosamine + a (3R)-hydroxyacyl-[ACP] = a UDP-2-N,3-O-bis[(3R)-3-hydroxyacyl]-alpha-D-glucosamine + holo-[ACP] + H(+). It participates in bacterial outer membrane biogenesis; LPS lipid A biosynthesis. Its function is as follows. Catalyzes the N-acylation of UDP-3-O-acylglucosamine using 3-hydroxyacyl-ACP as the acyl donor. Is involved in the biosynthesis of lipid A, a phosphorylated glycolipid that anchors the lipopolysaccharide to the outer membrane of the cell. The sequence is that of UDP-3-O-acylglucosamine N-acyltransferase 2 from Legionella pneumophila (strain Paris).